Reading from the N-terminus, the 200-residue chain is Putative protein ATXN8OS (200 aa).

The tract at residues P19–E39 is disordered. Acidic residues predominate over residues E25–E39.

Expressed in brain. Expressed in muscle tissues (at protein level).

The protein resides in the cytoplasm. This Homo sapiens (Human) protein is Putative protein ATXN8OS.